Here is a 352-residue protein sequence, read N- to C-terminus: Mitochondrial adenine nucleotide transporter ADNT1 (352 aa).

Solcar repeat units follow at residues 36–123, 139–227, and 242–343; these read KSIC…ASNG, LTPL…LKDW, and LTVV…VKDV. Transmembrane regions (helical) follow at residues 41–61, 100–120, 145–162, 202–221, 242–263, and 324–340; these read SLFA…PLER, GTNC…YEQA, LGAG…TYPM, GWLP…FSVY, LTVV…TIAY, and VKVV…YEMV.

This sequence belongs to the mitochondrial carrier (TC 2.A.29) family. As to expression, expressed in seedling radicles and roots, vasculature of cotyledons, leaf primordia, leaves and sepals.

It localises to the mitochondrion inner membrane. Its activity is regulated as follows. Inhibited by pyridoxal 5-phosphate, bathophenanthroline, mersalyl, p-hydroxymercuribenzoate and tannic acid. In terms of biological role, mitochondrial adenylate carrier that catalyzes specifically the transport of ATP, ADP and AMP by a counter-exchange mechanism across the inner mitochondrial membrane. Substrate preference in reconstituted proteoliposomes is ATP &gt; AMP &gt; ADP. May play a role in oxidative phosphorylation and be important for the provision of energy required to support growth in heterotrophic tissues. The chain is Mitochondrial adenine nucleotide transporter ADNT1 (ADNT1) from Arabidopsis thaliana (Mouse-ear cress).